Reading from the N-terminus, the 47-residue chain is Wound-induced basic protein (47 aa).

The tract at residues 1 to 47 is disordered; that stretch reads MIYDVNSPLFRSFLSQKGGSSDKRKTEEQKPKEHRPKASENKPIMTE. Over residues 20–40 the composition is skewed to basic and acidic residues; the sequence is SSDKRKTEEQKPKEHRPKASE.

In terms of tissue distribution, abundant in radicals and epicotyls of seedlings and higher in the roots than in stems and leaves of mature plants.

The sequence is that of Wound-induced basic protein (PR4) from Phaseolus vulgaris (Kidney bean).